We begin with the raw amino-acid sequence, 333 residues long: Electron transfer flavoprotein subunit alpha, mitochondrial (333 aa).

A mitochondrion-targeting transit peptide spans 1–19; sequence MFRAAAPGQLRRAASLLRF. The tract at residues 20-204 is domain I; that stretch reads QSTLVIAEHA…GISEWLDQKL (185 aa). The residue at position 59 (lysine 59) is an N6-acetyllysine; alternate. Lysine 59 bears the N6-succinyllysine; alternate mark. Lysine 62 carries the N6-acetyllysine modification. Lysine 69 is modified (N6-acetyllysine; alternate). Lysine 69 carries the N6-succinyllysine; alternate modification. An N6-acetyllysine modification is found at lysine 75. The residue at position 85 (lysine 85) is an N6-acetyllysine; alternate. Lysine 85 bears the N6-succinyllysine; alternate mark. Position 93 is a phosphothreonine (threonine 93). 2 positions are modified to N6-acetyllysine: lysine 101 and lysine 139. Serine 140 carries the phosphoserine modification. Position 158 is an N6-acetyllysine; alternate (lysine 158). Lysine 158 is modified (N6-succinyllysine; alternate). At lysine 164 the chain carries N6-acetyllysine. Lysine 187 carries the post-translational modification N6-succinyllysine. Lysine 203 bears the N6-acetyllysine; alternate mark. N6-succinyllysine; alternate is present on lysine 203. A domain II region spans residues 205-333; sequence TKSDRPELTG…PEMTEILKKK (129 aa). Residue lysine 216 is modified to N6-succinyllysine. Arginine 223 lines the FAD pocket. 2 positions are modified to N6-acetyllysine; alternate: lysine 226 and lysine 232. N6-succinyllysine; alternate occurs at positions 226 and 232. Residues serine 248, 263–266, 281–286, and asparagine 300 each bind FAD; these read VGQT and SGAIQH. At lysine 301 the chain carries N6-succinyllysine. 318 to 319 contacts FAD; that stretch reads DL.

It belongs to the ETF alpha-subunit/FixB family. As to quaternary structure, heterodimer composed of ETFA and ETFB. Identified in a complex that contains ETFA, ETFB and ETFRF1. Interaction with ETFRF1 promotes dissociation of the bound FAD and loss of electron transfer activity. Interacts with TASOR. It depends on FAD as a cofactor. In terms of tissue distribution, expressed in the spermatogonia, spermatocytes, ovary and granular cells within the cerebellum.

Its subcellular location is the mitochondrion matrix. Functionally, heterodimeric electron transfer flavoprotein that accepts electrons from several mitochondrial dehydrogenases, including acyl-CoA dehydrogenases, glutaryl-CoA and sarcosine dehydrogenase. It transfers the electrons to the main mitochondrial respiratory chain via ETF-ubiquinone oxidoreductase (ETF dehydrogenase). Required for normal mitochondrial fatty acid oxidation and normal amino acid metabolism. This is Electron transfer flavoprotein subunit alpha, mitochondrial (Etfa) from Mus musculus (Mouse).